Consider the following 761-residue polypeptide: Subtilisin-like protease SBT3 (761 aa).

Residues 1-22 (MELLHLLLFSWALSAHLFLALA) form the signal peptide. The propeptide occupies 23 to 112 (QRSTYIVHLD…AYKDRTVEPH (90 aa)). An Inhibitor I9 domain is found at 26–110 (TYIVHLDKSL…ISAYKDRTVE (85 aa)). The region spanning 116-606 (TSDFLKLNPS…AGHVDPNRAL (491 aa)) is the Peptidase S8 domain. The Charge relay system role is filled by Asp144. Residues Cys170 and Cys181 are joined by a disulfide bond. 2 N-linked (GlcNAc...) (complex) asparagine; alternate glycosylation sites follow: Asn177 and Asn203. Residues Asn177 and Asn203 are each glycosylated (N-linked (GlcNAc...) (paucimannose) asparagine; alternate). The Charge relay system role is filled by His215. N-linked (GlcNAc...) (paucimannose) asparagine; partial glycosylation is present at Asn376. Cysteines 382 and 401 form a disulfide. Ser538 (charge relay system) is an active-site residue. Residues 574–598 (LDNTRKPIKDSDNNKAATPLDMGAG) are disordered. Residues 575-586 (DNTRKPIKDSDN) show a composition bias toward basic and acidic residues. Cysteines 624 and 645 form a disulfide. N-linked (GlcNAc...) (complex) asparagine; alternate glycosylation is found at Asn697 and Asn745. 2 N-linked (GlcNAc...) (paucimannose) asparagine; alternate glycosylation sites follow: Asn697 and Asn745. Residues 756 to 761 (PIIEVW) form a necessary for prodomain cleavage and secretion region.

Belongs to the peptidase S8 family. In terms of assembly, homodimer. Propeptide is internally cleaved at Asn-38 and Asp-52 in a pH-dependent manner leading to the dissociation of the propeptide from the catalytic domain and resulting in the release of the active subtilase. Cleavage occurs at pH 5.7 and to a stronger extent at pH 5.2. Expressed in flowers, cotyledons and leaves with the highest expression in roots.

It localises to the secreted. With respect to regulation, inhibited by 1 mM 4-(2-aminoethyl)-benzenesulfonyl fluoride (AEBSF), a general inhibitor of serine proteinases, but not by the more selective serine protease inhibitors N-alpha-tosyl-L-lysinyl-chloromethylketone (TLCK), N-tosyl-L-phenylalaninyl-chloromethylketone (TPCK), leupeptin, aprotinin or benzamidine. Its proteolytic activity is autoinhibited by the non-covalent binding of the propeptide to the catalytic domain. No effect on activity by the addition of CaCl(2) or calcium chelators. Functionally, serine protease. Has preference for Gln in the P1 position and Lys in the P2 position of oligopeptide substrates. Active also with His in the P1 position. Involved in resistance against insects partly by regulating expression of systemic wound response genes and possibly by its post-ingestive activity in the insect gut. Apart from the role in defense, may be involved in regulation of pectin methylesterases (PMEs) activity and pectin methylesterification of the cell wall. This Solanum lycopersicum (Tomato) protein is Subtilisin-like protease SBT3.